The chain runs to 242 residues: Venom redulysin 2 (242 aa).

A signal peptide spans 1 to 19; sequence MSKIWILLLLVGAVQFARG. The propeptide occupies 20 to 46; the sequence is FPALEEEQEDDVIDWPSFEYDLSDEER.

The protein belongs to the redulysin-like family. In terms of processing, contains 5 disulfide bonds. Expressed by the venom gland (posterior main gland) (at protein level).

The protein resides in the secreted. Functionally, highly abundant protein that may be responsible for the observed disruption of sensory neuron membranes, since it is homologous to proteins such as trialysin, which forms pores in lipid bilayers. Probable insecticidal toxin. This chain is Venom redulysin 2, found in Platymeris rhadamanthus (Red spot assassin bug).